The following is a 139-amino-acid chain: Large ribosomal subunit protein bL20 (139 aa).

It belongs to the bacterial ribosomal protein bL20 family.

In terms of biological role, binds directly to 23S ribosomal RNA and is necessary for the in vitro assembly process of the 50S ribosomal subunit. It is not involved in the protein synthesizing functions of that subunit. This chain is Large ribosomal subunit protein bL20, found in Leuconostoc citreum (strain KM20).